Consider the following 161-residue polypeptide: Allophycocyanin beta chain (161 aa).

Asparagine 71 is modified (N4-methylasparagine). Cysteine 81 contacts (2R,3E)-phycocyanobilin.

Belongs to the phycobiliprotein family. As to quaternary structure, heterodimer of an alpha and a beta chain. Post-translationally, contains one covalently linked phycocyanobilin chromophore.

Its subcellular location is the plastid. It is found in the chloroplast thylakoid membrane. Its function is as follows. Light-harvesting photosynthetic bile pigment-protein from the phycobiliprotein complex. Allophycocyanin has a maximum absorption at approximately 650 nanometers. In Pyropia haitanensis (Red seaweed), this protein is Allophycocyanin beta chain (apcB).